Consider the following 546-residue polypeptide: Chaperonin GroEL (546 aa).

ATP-binding positions include 29–32 (TMGP), Lys-50, 86–90 (DGTTT), Gly-414, and Asp-492.

Belongs to the chaperonin (HSP60) family. Forms a cylinder of 14 subunits composed of two heptameric rings stacked back-to-back. Interacts with the co-chaperonin GroES.

It localises to the cytoplasm. The enzyme catalyses ATP + H2O + a folded polypeptide = ADP + phosphate + an unfolded polypeptide.. Together with its co-chaperonin GroES, plays an essential role in assisting protein folding. The GroEL-GroES system forms a nano-cage that allows encapsulation of the non-native substrate proteins and provides a physical environment optimized to promote and accelerate protein folding. The chain is Chaperonin GroEL from Helicobacter pylori (strain Shi470).